The chain runs to 349 residues: Glycosyltransferase 8 domain-containing protein 2 (349 aa).

The Cytoplasmic portion of the chain corresponds to Met-1–Lys-6. A helical; Signal-anchor for type II membrane protein membrane pass occupies residues Ile-7–Tyr-24. Residues Lys-25–Ser-349 are Lumenal-facing. N-linked (GlcNAc...) asparagine glycosylation occurs at Asn-234.

The protein belongs to the glycosyltransferase 8 family.

The protein resides in the membrane. The chain is Glycosyltransferase 8 domain-containing protein 2 (GLT8D2) from Homo sapiens (Human).